The sequence spans 199 residues: ATP-dependent Clp protease proteolytic subunit 3 (199 aa).

Serine 101 (nucleophile) is an active-site residue. The active site involves histidine 126.

The protein belongs to the peptidase S14 family. In terms of assembly, fourteen ClpP subunits assemble into 2 heptameric rings which stack back to back to give a disk-like structure with a central cavity, resembling the structure of eukaryotic proteasomes.

The protein localises to the cytoplasm. It carries out the reaction Hydrolysis of proteins to small peptides in the presence of ATP and magnesium. alpha-casein is the usual test substrate. In the absence of ATP, only oligopeptides shorter than five residues are hydrolyzed (such as succinyl-Leu-Tyr-|-NHMec, and Leu-Tyr-Leu-|-Tyr-Trp, in which cleavage of the -Tyr-|-Leu- and -Tyr-|-Trp bonds also occurs).. Its function is as follows. Cleaves peptides in various proteins in a process that requires ATP hydrolysis. Has a chymotrypsin-like activity. Plays a major role in the degradation of misfolded proteins. This Synechococcus elongatus (strain ATCC 33912 / PCC 7942 / FACHB-805) (Anacystis nidulans R2) protein is ATP-dependent Clp protease proteolytic subunit 3.